A 385-amino-acid chain; its full sequence is Glucose-fructose oxidoreductase domain-containing protein 2 (385 aa).

The N-terminal stretch at 1-25 (MKLLPGVGVFGTGSSARVLVPLLRA) is a signal peptide.

This sequence belongs to the Gfo/Idh/MocA family.

Its subcellular location is the secreted. It is found in the extracellular space. The protein localises to the extracellular matrix. Functionally, promotes matrix assembly. The protein is Glucose-fructose oxidoreductase domain-containing protein 2 (Gfod2) of Mus musculus (Mouse).